The primary structure comprises 452 residues: Pup--protein ligase 1 (452 aa).

Glu9 lines the Mg(2+) pocket. An ATP-binding site is contributed by Arg53. Residue Tyr55 coordinates Mg(2+). Residue Asp57 is the Proton acceptor of the active site. Residue Glu63 coordinates Mg(2+). Positions 66 and 419 each coordinate ATP.

It belongs to the Pup ligase/Pup deamidase family. Pup-conjugating enzyme subfamily.

The catalysed reaction is ATP + [prokaryotic ubiquitin-like protein]-L-glutamate + [protein]-L-lysine = ADP + phosphate + N(6)-([prokaryotic ubiquitin-like protein]-gamma-L-glutamyl)-[protein]-L-lysine.. It functions in the pathway protein degradation; proteasomal Pup-dependent pathway. The protein operates within protein modification; protein pupylation. Catalyzes the covalent attachment of the prokaryotic ubiquitin-like protein modifier Pup to the proteasomal substrate proteins, thereby targeting them for proteasomal degradation. This tagging system is termed pupylation. The ligation reaction involves the side-chain carboxylate of the C-terminal glutamate of Pup and the side-chain amino group of a substrate lysine. The protein is Pup--protein ligase 1 of Rhodococcus erythropolis (Arthrobacter picolinophilus).